Consider the following 468-residue polypeptide: Sulfate adenylyltransferase subunit 1 (468 aa).

In terms of domain architecture, tr-type G spans 22–239 (KELLRFLTCG…TVEIASDKNA (218 aa)). A G1 region spans residues 31–38 (GSVDDGKS). 31–38 (GSVDDGKS) provides a ligand contact to GTP. The tract at residues 89 to 93 (GITID) is G2. The G3 stretch occupies residues 110-113 (DTPG). Residues 110–114 (DTPGH) and 165–168 (NKMD) each bind GTP. The segment at 165 to 168 (NKMD) is G4. The interval 202–204 (SAL) is G5.

This sequence belongs to the TRAFAC class translation factor GTPase superfamily. Classic translation factor GTPase family. CysN/NodQ subfamily. In terms of assembly, heterodimer composed of CysD, the smaller subunit, and CysN.

The enzyme catalyses sulfate + ATP + H(+) = adenosine 5'-phosphosulfate + diphosphate. It functions in the pathway sulfur metabolism; hydrogen sulfide biosynthesis; sulfite from sulfate: step 1/3. With CysD forms the ATP sulfurylase (ATPS) that catalyzes the adenylation of sulfate producing adenosine 5'-phosphosulfate (APS) and diphosphate, the first enzymatic step in sulfur assimilation pathway. APS synthesis involves the formation of a high-energy phosphoric-sulfuric acid anhydride bond driven by GTP hydrolysis by CysN coupled to ATP hydrolysis by CysD. The protein is Sulfate adenylyltransferase subunit 1 of Teredinibacter turnerae (strain ATCC 39867 / T7901).